A 547-amino-acid chain; its full sequence is Probable FMN/FAD exporter YeeO (547 aa).

The next 11 membrane-spanning stretches (helical) occupy residues 94–114 (ITPL…MGVL), 139–159 (VIMA…AFSL), 174–194 (SLVI…HFGE), 211–231 (LALT…ITLI), 246–268 (LLIN…YGLF), 281–301 (GLTI…AIGF), 318–338 (FSII…SVLF), 350–370 (AGMG…AALI), 404–424 (VFWL…PFAG), 439–459 (VVVI…ASWV), and 486–506 (VVVG…VWMG).

It belongs to the multi antimicrobial extrusion (MATE) (TC 2.A.66.1) family.

It localises to the cell inner membrane. Its function is as follows. A transporter able to export peptides and flavins. When overexpressed allows cells deleted for multiple peptidases (pepA, pepB, pepD and pepN) to grow in the presence of dipeptides Ala-Gln or Gly-Tyr which otherwise inhibit growth. Cells overexpressing this protein have decreased intracellular levels of Ala-Gln dipeptide, and in a system that produces the Ala-Gln dipeptide, overproduction of this protein increases its export. When overexpressed increases secretion of FMN and FAD but not riboflavin; intracellular concentrations of FMN and riboflavin rise, possibly to compensate for increased secretion. Increased overexpression causes slight cell elongation. The sequence is that of Probable FMN/FAD exporter YeeO (yeeO) from Escherichia coli (strain K12).